The chain runs to 339 residues: MKDVNEEERIIGAESSEEDETIELSLRPQLLAQYIGQDKVKSEMKIYIKAAKQRDEALDHVLLYGPPGLGKTTLAFVIANEMGVHLKSTSGPAIEKAGDLVALLSELNPGDVLFIDEIHRLAKPVEEVLYSAMEDFYIDIVVGEGQTTHAVHVPLPPFTLIGATTRAGQLSAPLRDRFGIIEHMQYYSVEDLEKIIQRSSVVFNTKIDPEAAIELARRSRGTPRVANRLLKRVRDFAEVKGEEAISLVTTKHSLHLLEVDDEGLDQTDRKLLRMMIENYGGGPVGIKTIAANVGEDTDTIEEVYEPYLLQKGFITRTPRGRSVTQKAYLQLGYPPKDEK.

The large ATPase domain (RuvB-L) stretch occupies residues K2–Y187. ATP-binding positions include L26, R27, G68, K71, T72, T73, E134–F136, R177, Y187, and R224. Residue T72 participates in Mg(2+) binding. The small ATPAse domain (RuvB-S) stretch occupies residues S188–E258. Residues D261–K339 form a head domain (RuvB-H) region. The DNA site is built by R316 and R321.

The protein belongs to the RuvB family. As to quaternary structure, homohexamer. Forms an RuvA(8)-RuvB(12)-Holliday junction (HJ) complex. HJ DNA is sandwiched between 2 RuvA tetramers; dsDNA enters through RuvA and exits via RuvB. An RuvB hexamer assembles on each DNA strand where it exits the tetramer. Each RuvB hexamer is contacted by two RuvA subunits (via domain III) on 2 adjacent RuvB subunits; this complex drives branch migration. In the full resolvosome a probable DNA-RuvA(4)-RuvB(12)-RuvC(2) complex forms which resolves the HJ.

Its subcellular location is the cytoplasm. The enzyme catalyses ATP + H2O = ADP + phosphate + H(+). In terms of biological role, the RuvA-RuvB-RuvC complex processes Holliday junction (HJ) DNA during genetic recombination and DNA repair, while the RuvA-RuvB complex plays an important role in the rescue of blocked DNA replication forks via replication fork reversal (RFR). RuvA specifically binds to HJ cruciform DNA, conferring on it an open structure. The RuvB hexamer acts as an ATP-dependent pump, pulling dsDNA into and through the RuvAB complex. RuvB forms 2 homohexamers on either side of HJ DNA bound by 1 or 2 RuvA tetramers; 4 subunits per hexamer contact DNA at a time. Coordinated motions by a converter formed by DNA-disengaged RuvB subunits stimulates ATP hydrolysis and nucleotide exchange. Immobilization of the converter enables RuvB to convert the ATP-contained energy into a lever motion, pulling 2 nucleotides of DNA out of the RuvA tetramer per ATP hydrolyzed, thus driving DNA branch migration. The RuvB motors rotate together with the DNA substrate, which together with the progressing nucleotide cycle form the mechanistic basis for DNA recombination by continuous HJ branch migration. Branch migration allows RuvC to scan DNA until it finds its consensus sequence, where it cleaves and resolves cruciform DNA. The polypeptide is Holliday junction branch migration complex subunit RuvB (Lactobacillus johnsonii (strain CNCM I-12250 / La1 / NCC 533)).